Reading from the N-terminus, the 39-residue chain is Putative beta-neurotoxin (39 aa).

Positions 1–39 (GGKEGYPLNSSNGCKSGRFAGTNSNENTECKGXDAENGY) are disordered. One can recognise an LCN-type CS-alpha/beta domain in the interval 3–39 (KEGYPLNSSNGCKSGRFAGTNSNENTECKGXDAENGY). Over residues 28–39 (TECKGXDAENGY) the composition is skewed to basic and acidic residues.

This sequence belongs to the long (4 C-C) scorpion toxin superfamily. Sodium channel inhibitor family. Beta subfamily. In terms of tissue distribution, expressed by the venom gland.

It localises to the secreted. Beta toxins bind voltage-independently at site-4 of sodium channels (Nav) and shift the voltage of activation toward more negative potentials thereby affecting sodium channel activation and promoting spontaneous and repetitive firing. This chain is Putative beta-neurotoxin, found in Tityus pachyurus (Colombian scorpion).